Consider the following 263-residue polypeptide: MDVMNAFDSQAEDSPTSLGRSLRRRPLARKKLSEMVEEELEQMIRRHEFGEGEQLPSERELMAFFNVGRPSVREALAALKRKGLVQINNGERARVSRPSADTIISELSGMAKDFLTHPGGIAHFEQLRLFFESSLVRYAAEHATDEQIALLTKALEINSQSLDDNALFIRSDVEFHRVLAEIPGNPIFMAIHVALLDWLIAARPSVPDRELHEHNNLSYQQHIVIVDAIRQRDPDKADRALQTHLNSVSATWHALGKKSQKMR.

A disordered region spans residues 1–25 (MDVMNAFDSQAEDSPTSLGRSLRRR). One can recognise an HTH gntR-type domain in the interval 30–98 (KKLSEMVEEE…NGERARVSRP (69 aa)). Positions 58–77 (ERELMAFFNVGRPSVREALA) form a DNA-binding region, H-T-H motif.

Belongs to the NanR family.

Functionally, transcriptional repressor that controls expression of the genes required for the catabolism of sialic acids. This Salmonella schwarzengrund (strain CVM19633) protein is HTH-type transcriptional repressor NanR.